The primary structure comprises 489 residues: HFKPILVLCLATLALGLFVPHFAADRNSIVHLFEWKWSDIADECERFLAPKGFGGVQISPPNENLVVTSSNRPWWERYQPVSYILNTRSGDEAALADMISRCNAVGVRIYVDTVINHMTGMGGTGTAGSQADRDGKNYPAVPYGSGDFHDSCTVNNYQDASNVRNCELVGLADLNQGSDYVRSKIIEYMNHLVDLGVAGFRVDAAKHMWPADLEAIYASLKNLNTDHGFLDGQKPFIFQEVIDLGGEAISKHEYTGFGTVIEFQYGLSLGNAFQGGNQLANLANWGPEWNLLDGLDAVAFIDNHDNQRTGGSQILTYKNPKPYKMAIAFMLAHPYGTTRLMSSFAFDNNDQGPPQDDAGNLISPSINDDGTCGNGYVCEHRWRQIFNMVGFRNAVQGTGIENWWSDGNQQIAFGRGNKGFVAFTIGYDLNQHLQTGLPAGSYCDVISGNAENGSCSGKTITVGGDGYADISLGANEDDGVIAIHVNAKL.

Residues 1 to 16 form the signal peptide; the sequence is HFKPILVLCLATLALG. A disulfide bridge connects residues Cys-44 and Cys-102. Ca(2+) is bound by residues Asn-116, Arg-164, and Asp-173. Residues Cys-152 and Cys-166 are joined by a disulfide bond. A chloride-binding site is contributed by Arg-201. The Nucleophile role is filled by Asp-203. Ca(2+) is bound at residue His-207. Glu-240 functions as the Proton donor in the catalytic mechanism. Positions 303 and 339 each coordinate chloride. 2 cysteine pairs are disulfide-bonded: Cys-372–Cys-378 and Cys-443–Cys-455.

The protein belongs to the glycosyl hydrolase 13 family. As to quaternary structure, monomer. It depends on Ca(2+) as a cofactor. Chloride is required as a cofactor.

The catalysed reaction is Endohydrolysis of (1-&gt;4)-alpha-D-glucosidic linkages in polysaccharides containing three or more (1-&gt;4)-alpha-linked D-glucose units.. The sequence is that of Alpha-amylase from Tribolium castaneum (Red flour beetle).